The chain runs to 359 residues: DNA integrity scanning protein DisA (359 aa).

The DAC domain maps to 7-146; it reads DDIFRATLAA…GRRYVLDGSA (140 aa). ATP-binding positions include glycine 74, leucine 92, and 105-109; that span reads TRHRT.

It belongs to the DisA family. Homooctamer. It depends on Mg(2+) as a cofactor.

The enzyme catalyses 2 ATP = 3',3'-c-di-AMP + 2 diphosphate. In terms of biological role, participates in a DNA-damage check-point that is active prior to asymmetric division when DNA is damaged. DisA forms globular foci that rapidly scan along the chromosomes during sporulation, searching for lesions. When a lesion is present, DisA pauses at the lesion site. This triggers a cellular response that culminates in a temporary block in sporulation initiation. Its function is as follows. Also has diadenylate cyclase activity, catalyzing the condensation of 2 ATP molecules into cyclic di-AMP (c-di-AMP). c-di-AMP acts as a signaling molecule that couples DNA integrity with progression of sporulation. The rise in c-di-AMP level generated by DisA while scanning the chromosome, operates as a positive signal that advances sporulation; upon encountering a lesion, the DisA focus arrests at the damaged site and halts c-di-AMP synthesis. The sequence is that of DNA integrity scanning protein DisA from Frankia alni (strain DSM 45986 / CECT 9034 / ACN14a).